A 256-amino-acid chain; its full sequence is Hydroxyacylglutathione hydrolase (256 aa).

Positions 57, 59, 61, 62, 115, 134, and 172 each coordinate Zn(2+).

The protein belongs to the metallo-beta-lactamase superfamily. Glyoxalase II family. As to quaternary structure, monomer. The cofactor is Zn(2+).

It catalyses the reaction an S-(2-hydroxyacyl)glutathione + H2O = a 2-hydroxy carboxylate + glutathione + H(+). Its pathway is secondary metabolite metabolism; methylglyoxal degradation; (R)-lactate from methylglyoxal: step 2/2. Thiolesterase that catalyzes the hydrolysis of S-D-lactoyl-glutathione to form glutathione and D-lactic acid. The polypeptide is Hydroxyacylglutathione hydrolase (Rhizobium meliloti (strain 1021) (Ensifer meliloti)).